A 380-amino-acid polypeptide reads, in one-letter code: Cytochrome b (380 aa).

Helical transmembrane passes span 33–53, 77–98, 113–133, and 178–198; these read FGSLLGLCLIIQILTGLFLAM, WLIRYMHANGASMFFICLFLHV, WNMGIILLFAVMATAFMGYVL, and FFAFHFILPFIITALVLVHLL. Residues His83 and His97 each coordinate heme b. Positions 182 and 196 each coordinate heme b. His201 provides a ligand contact to a ubiquinone. The next 4 membrane-spanning stretches (helical) occupy residues 226–246, 288–308, 320–340, and 347–367; these read IKDFLGVLVLLMAFMILVLFF, LGGVLALILSILILALMPLLH, ITQTMYWILVADLLILTWIGG, and FIMIGQAASIAYFAIIVIFMP.

The protein belongs to the cytochrome b family. In terms of assembly, the cytochrome bc1 complex contains 11 subunits: 3 respiratory subunits (MT-CYB, CYC1 and UQCRFS1), 2 core proteins (UQCRC1 and UQCRC2) and 6 low-molecular weight proteins (UQCRH/QCR6, UQCRB/QCR7, UQCRQ/QCR8, UQCR10/QCR9, UQCR11/QCR10 and a cleavage product of UQCRFS1). This cytochrome bc1 complex then forms a dimer. Heme b is required as a cofactor.

The protein localises to the mitochondrion inner membrane. Component of the ubiquinol-cytochrome c reductase complex (complex III or cytochrome b-c1 complex) that is part of the mitochondrial respiratory chain. The b-c1 complex mediates electron transfer from ubiquinol to cytochrome c. Contributes to the generation of a proton gradient across the mitochondrial membrane that is then used for ATP synthesis. The chain is Cytochrome b (MT-CYB) from Chionomys roberti (Robert's snow vole).